Here is a 327-residue protein sequence, read N- to C-terminus: Putative D-threonate 4-phosphate dehydrogenase (327 aa).

Substrate is bound by residues H139 and T140. Residues H169, H213, and H268 each coordinate a divalent metal cation. Positions 276, 285, and 294 each coordinate substrate.

Belongs to the PdxA family. PdxA2 subfamily. In terms of assembly, homodimer. It depends on a divalent metal cation as a cofactor.

The enzyme catalyses 4-O-phospho-D-threonate + NAD(+) = dihydroxyacetone phosphate + CO2 + NADH. In terms of biological role, catalyzes the NAD-dependent oxidation and subsequent decarboxylation of D-threonate 4-phosphate to produce dihydroxyacetone phosphate (DHAP). The polypeptide is Putative D-threonate 4-phosphate dehydrogenase (Salmonella typhi).